The sequence spans 56 residues: Large ribosomal subunit protein bL33 (56 aa).

The protein belongs to the bacterial ribosomal protein bL33 family.

The sequence is that of Large ribosomal subunit protein bL33 from Vibrio campbellii (strain ATCC BAA-1116).